Reading from the N-terminus, the 94-residue chain is Long neurotoxin LNTX8 (94 aa).

A signal peptide spans 1-21; the sequence is MKTLLLTLVVVTIMCLDLGYT. Intrachain disulfides connect Cys-24-Cys-43, Cys-36-Cys-64, Cys-49-Cys-53, Cys-68-Cys-79, and Cys-80-Cys-85.

This sequence belongs to the three-finger toxin family. Long-chain subfamily. Type II alpha-neurotoxin sub-subfamily. In terms of tissue distribution, expressed by the venom gland.

The protein localises to the secreted. In terms of biological role, binds with high affinity to muscular (alpha-1/CHRNA1) and neuronal (alpha-7/CHRNA7) nicotinic acetylcholine receptor (nAChR) and inhibits acetylcholine from binding to the receptor, thereby impairing neuromuscular and neuronal transmission. This is Long neurotoxin LNTX8 from Ophiophagus hannah (King cobra).